The following is a 616-amino-acid chain: Chaperone protein HscA (616 aa).

It belongs to the heat shock protein 70 family.

In terms of biological role, chaperone involved in the maturation of iron-sulfur cluster-containing proteins. Has a low intrinsic ATPase activity which is markedly stimulated by HscB. Involved in the maturation of IscU. The sequence is that of Chaperone protein HscA from Klebsiella pneumoniae subsp. pneumoniae (strain ATCC 700721 / MGH 78578).